The primary structure comprises 207 residues: Ras-related protein Rab-8B (207 aa).

The GTP site is built by Ser-17, Gly-18, Val-19, Gly-20, Lys-21, Thr-22, Cys-23, Thr-35, Ser-39, and Thr-40. Thr-22 contacts Mg(2+). 2 short sequence motifs (switch) span residues 31 to 45 (DAFNTTFISTIGIDF) and 63 to 80 (DTAGQERFRTITTAYYRG). Residues Thr-40 and Asp-63 each coordinate Mg(2+). Gly-66 provides a ligand contact to GTP. The residue at position 72 (Thr-72) is a Phosphothreonine; by LRRK2. Asn-121, Lys-122, Asp-124, Ala-152, and Lys-153 together coordinate GTP. Phosphoserine is present on residues Ser-180 and Ser-183. Cysteine methyl ester is present on Cys-204. The S-geranylgeranyl cysteine moiety is linked to residue Cys-204. The propeptide at 205–207 (SLL) is removed in mature form.

The protein belongs to the small GTPase superfamily. Rab family. As to quaternary structure, associated with actin, delta-catenin and alpha and beta tubulins. Interacts with OTOF. Interacts with PEX5R. Interacts with RAB3IP. Interacts with VIM. Interacts with CDH1. Interacts with MICALL2. Interacts with GDI1, GDI2, CHML and CHM; phosphorylation at Thr-72 disrupts these interactions. Interacts with MICAL1. Requires Mg(2+) as cofactor. Phosphorylation of Thr-72 in the switch II region by LRRK2 prevents the association of RAB regulatory proteins, including CHM, CHML and RAB GDP dissociation inhibitors GDI1 and GDI2.

It localises to the cell membrane. Its subcellular location is the cytoplasmic vesicle. The protein resides in the phagosome membrane. The protein localises to the endosome membrane. The enzyme catalyses GTP + H2O = GDP + phosphate + H(+). Regulated by guanine nucleotide exchange factors (GEFs) including RAB3IP/RABIN8 which promotes the exchange of bound GDP for free GTP. Regulated by GTPase activating proteins (GAPs) which increase the GTP hydrolysis activity. Inhibited by GDP dissociation inhibitors (GDIs). The small GTPases Rab are key regulators of intracellular membrane trafficking, from the formation of transport vesicles to their fusion with membranes. Rabs cycle between an inactive GDP-bound form and an active GTP-bound form that is able to recruit to membranes different sets of downstream effectors directly responsible for vesicle formation, movement, tethering and fusion. RAB8B may be involved in polarized vesicular trafficking and neurotransmitter release. May participate in cell junction dynamics in Sertoli cells. May also participate in the export of a subset of neosynthesized proteins through a Rab8-Rab10-Rab11-dependent endososomal export route. The polypeptide is Ras-related protein Rab-8B (Mus musculus (Mouse)).